Consider the following 56-residue polypeptide: Large ribosomal subunit protein bL32 (56 aa).

The tract at residues 1–21 (MGVPQRRQSHARKNKRRSEWR) is disordered. A compositionally biased stretch (basic residues) spans 7–19 (RQSHARKNKRRSE).

This sequence belongs to the bacterial ribosomal protein bL32 family.

This Syntrophomonas wolfei subsp. wolfei (strain DSM 2245B / Goettingen) protein is Large ribosomal subunit protein bL32.